The primary structure comprises 147 residues: Epididymal secretory protein E3-alpha (147 aa).

The N-terminal stretch at 1–25 is a signal peptide; that stretch reads MTSSLKIWGILLALLCILCRLCVYS.

As to expression, epididymis, with predominant expression in the corpus region. Moderately expressed in the vas deferens; only low levels are detectable in the caput and cauda regions.

The protein localises to the secreted. Functionally, possible function in sperm maturation. The protein is Epididymal secretory protein E3-alpha (EDDM3A) of Homo sapiens (Human).